The primary structure comprises 881 residues: Putative outer membrane usher protein YfcU (881 aa).

A signal peptide spans 1–29 (MPDHSLFRLRILPWCIALAMSGSYSSVWA).

This sequence belongs to the fimbrial export usher family.

The protein resides in the cell outer membrane. Functionally, part of the yfcOPQRSUV fimbrial operon. Could contribute to adhesion to various surfaces in specific environmental niches. Increases adhesion to eukaryotic T24 bladder epithelial cells in the absence of fim genes. Probably involved in the export and assembly of fimbrial subunits across the outer membrane. The polypeptide is Putative outer membrane usher protein YfcU (yfcU) (Escherichia coli (strain K12)).